The following is a 275-amino-acid chain: Diaminopimelate epimerase (275 aa).

Substrate is bound by residues asparagine 12, glutamine 45, and asparagine 65. Cysteine 74 (proton donor) is an active-site residue. Substrate-binding positions include 75 to 76, asparagine 158, asparagine 191, and 209 to 210; these read GN and ER. Cysteine 218 acts as the Proton acceptor in catalysis. 219-220 contacts substrate; sequence GT.

This sequence belongs to the diaminopimelate epimerase family. Homodimer.

It is found in the cytoplasm. It catalyses the reaction (2S,6S)-2,6-diaminopimelate = meso-2,6-diaminopimelate. It functions in the pathway amino-acid biosynthesis; L-lysine biosynthesis via DAP pathway; DL-2,6-diaminopimelate from LL-2,6-diaminopimelate: step 1/1. Its function is as follows. Catalyzes the stereoinversion of LL-2,6-diaminopimelate (L,L-DAP) to meso-diaminopimelate (meso-DAP), a precursor of L-lysine and an essential component of the bacterial peptidoglycan. This chain is Diaminopimelate epimerase, found in Shewanella putrefaciens (strain CN-32 / ATCC BAA-453).